The chain runs to 236 residues: Small ribosomal subunit protein uS2c (236 aa).

Belongs to the universal ribosomal protein uS2 family.

It is found in the plastid. The protein resides in the chloroplast. The chain is Small ribosomal subunit protein uS2c (rps2) from Populus alba (White poplar).